The sequence spans 564 residues: Solute carrier family 22 member 21 (564 aa).

Residues 1 to 20 (MLDYDEVTAFLGEWGTFQRL) are Cytoplasmic-facing. A helical transmembrane segment spans residues 21-41 (IFFLLSASIIPNGFTGLSAVF). The Extracellular portion of the chain corresponds to 42–142 (LTAIPEHRCR…DLVCKDDWKA (101 aa)). N-linked (GlcNAc...) asparagine glycosylation is found at N57, N64, and N91. A helical membrane pass occupies residues 143–163 (PLTTSFFYVGVLLGSFISGQL). Residues 164-172 (SDRFGRKNI) are Cytoplasmic-facing. The chain crosses the membrane as a helical span at residues 173–193 (LFLTMAMHTGFSFIQVFSVNF). At 194-197 (EMFT) the chain is on the extracellular side. The chain crosses the membrane as a helical span at residues 198 to 218 (LLYTLVGMGHISNYVAAFVLG). ATP is bound at residue 218–225 (GTEMLSKS). Topologically, residues 219–232 (TEMLSKSVRIIFAT) are cytoplasmic. A helical membrane pass occupies residues 233-253 (LGVCIFFAFGFMVLPLFAYFI). Residues 254–257 (REWR) are Extracellular-facing. Residues 258 to 278 (RLLLAITLPGVLCGALWWFIP) form a helical membrane-spanning segment. The Cytoplasmic portion of the chain corresponds to 279–344 (ESPRWLISQG…YDLVRTPNIR (66 aa)). The chain crosses the membrane as a helical span at residues 345-365 (ILTIMSIILWLTISVGYFGLS). At 366–376 (LDTPNLNGNIY) the chain is on the extracellular side. The helical transmembrane segment at 377 to 397 (VNCFLLAAVEVPAYVLAWLLL) threads the bilayer. Residues 398–409 (QHVSRRYSMAGS) lie on the Cytoplasmic side of the membrane. A helical membrane pass occupies residues 410–430 (LFLGGSVLLLVQLVPSDLHYL). Over 431-433 (STT) the chain is Extracellular. The helical transmembrane segment at 434–454 (LVMVGKFGITSAYSMVYVYTA) threads the bilayer. Residues 455 to 465 (ELYPTVVRNMG) are Cytoplasmic-facing. Residues 466 to 486 (VGVSSTASRLGSILSPYFVYL) traverse the membrane as a helical segment. Topologically, residues 487 to 491 (GAYDR) are extracellular. A helical membrane pass occupies residues 492-512 (RLPYILMGSLTILTAIITLFF). Topologically, residues 513 to 564 (PESSGVSLPETIDEMQKVKKLKQRQSLSKKGSPKESKGNVSRTSRTSEPKGF) are cytoplasmic. The disordered stretch occupies residues 532–564 (KLKQRQSLSKKGSPKESKGNVSRTSRTSEPKGF).

This sequence belongs to the major facilitator (TC 2.A.1) superfamily. Organic cation transporter (TC 2.A.1.19) family. As to expression, predominantly expressed in testis.

The protein localises to the peroxisome membrane. Sodium-ion independent, medium affinity carnitine transporter. Also transports organic cations such as tetraethylammonium (TEA) without the involvement of sodium. Relative uptake activity ratio of carnitine to TEA is 746. This chain is Solute carrier family 22 member 21 (Slc22a21), found in Mus musculus (Mouse).